A 281-amino-acid polypeptide reads, in one-letter code: Tryptophan 2,3-dioxygenase (281 aa).

Substrate is bound by residues 50–54 (FIIQH), tyrosine 112, and arginine 116. Residue histidine 239 coordinates heme. Threonine 253 provides a ligand contact to substrate.

Belongs to the tryptophan 2,3-dioxygenase family. Homotetramer. Heme is required as a cofactor.

It carries out the reaction L-tryptophan + O2 = N-formyl-L-kynurenine. Its pathway is amino-acid degradation; L-tryptophan degradation via kynurenine pathway; L-kynurenine from L-tryptophan: step 1/2. Functionally, heme-dependent dioxygenase that catalyzes the oxidative cleavage of the L-tryptophan (L-Trp) pyrrole ring and converts L-tryptophan to N-formyl-L-kynurenine. Catalyzes the oxidative cleavage of the indole moiety. The protein is Tryptophan 2,3-dioxygenase of Saccharopolyspora erythraea (strain ATCC 11635 / DSM 40517 / JCM 4748 / NBRC 13426 / NCIMB 8594 / NRRL 2338).